The sequence spans 787 residues: Protein PAT1 homolog 2 (787 aa).

Disordered regions lie at residues 94–120, 134–221, 338–374, 411–445, and 765–787; these read KHLGVIGDRGSGSFSRESSTATDWTQD, EQVQ…NASP, VREHKHKSSHRSRKNRGGISQQTSDLASQKSESGLQF, LAKKSSGSRTKPQLYPSHLKDHQSRSRNSSDQQPQ, and VSESTTTRASASGGQINSEFVRG. Over residues 105 to 120 the composition is skewed to polar residues; that stretch reads GSFSRESSTATDWTQD. Residues 142–153 show a composition bias toward low complexity; the sequence is SSQPQSSPNSNS. Polar residues-rich tracts occupy residues 154 to 171, 180 to 198, and 208 to 221; these read LYRTSSYPQQQTQLQHYS, STFTSFPSPGKRSQQSSPS, and GGSQSNFSAPNASP. Residues Ser-184 and Ser-192 each carry the phosphoserine modification. Residues 341–353 are compositionally biased toward basic residues; sequence HKHKSSHRSRKNR. Composition is skewed to polar residues over residues 355–373 and 436–445; these read GISQQTSDLASQKSESGLQ and SRNSSDQQPQ.

Activator of mRNA decapping. Involved in mRNA decay via decapping. The polypeptide is Protein PAT1 homolog 2 (Arabidopsis thaliana (Mouse-ear cress)).